Reading from the N-terminus, the 298-residue chain is O-glycoside alpha-1,2-mannosyltransferase homolog 6 (298 aa).

Glu220 (nucleophile) is an active-site residue.

This sequence belongs to the glycosyltransferase 15 family.

It localises to the cytoplasm. Its subcellular location is the nucleus. Functionally, probable mannosyltransferase involved in O-glycosylation of cell wall and secreted proteins. This Schizosaccharomyces pombe (strain 972 / ATCC 24843) (Fission yeast) protein is O-glycoside alpha-1,2-mannosyltransferase homolog 6 (omh6).